Here is a 152-residue protein sequence, read N- to C-terminus: MARMHARRRGISRSVRPYRTQAPEWSNTDKEAIIKQIVDLRRQGSSTAEIGLVMRDKYGVPSVKLATGKKITQILRDNDLASEIPEDLRNLIEKALGMRKHLAENKRDIHNKRQLMLTESKVRRLVKYYVSSKKLPKDWVYKPETAEILLSK.

The protein belongs to the universal ribosomal protein uS15 family. As to quaternary structure, part of the 30S ribosomal subunit.

The sequence is that of Small ribosomal subunit protein uS15 from Methanospirillum hungatei JF-1 (strain ATCC 27890 / DSM 864 / NBRC 100397 / JF-1).